An 85-amino-acid polypeptide reads, in one-letter code: Large ribosomal subunit protein bL27 (85 aa).

Belongs to the bacterial ribosomal protein bL27 family.

In Xylella fastidiosa (strain Temecula1 / ATCC 700964), this protein is Large ribosomal subunit protein bL27.